We begin with the raw amino-acid sequence, 393 residues long: Probable galacturonosyltransferase-like 8 (393 aa).

The Cytoplasmic segment spans residues 1–4 (MSSR). A helical; Signal-anchor for type II membrane protein transmembrane segment spans residues 5-25 (FSLTVVCLIALLPFVVGIRLI). Topologically, residues 26–393 (PARITSVGDG…SELTDDSSFL (368 aa)) are lumenal. The N-linked (GlcNAc...) asparagine glycan is linked to asparagine 226.

This sequence belongs to the glycosyltransferase 8 family.

It localises to the golgi apparatus membrane. The protein operates within glycan metabolism; pectin biosynthesis. Its function is as follows. May be involved in pectin and/or xylans biosynthesis in cell walls. The chain is Probable galacturonosyltransferase-like 8 (GATL8) from Arabidopsis thaliana (Mouse-ear cress).